A 319-amino-acid chain; its full sequence is Geranylgeranyl pyrophosphate synthase (319 aa).

The isopentenyl diphosphate site is built by lysine 42, arginine 45, and histidine 74. Residues aspartate 81 and aspartate 85 each coordinate Mg(2+). Arginine 90 lines the dimethylallyl diphosphate pocket. Position 91 (arginine 91) interacts with isopentenyl diphosphate. Positions 172, 173, 210, 226, and 236 each coordinate dimethylallyl diphosphate.

This sequence belongs to the FPP/GGPP synthase family. As to quaternary structure, homodimer. Mg(2+) is required as a cofactor.

The catalysed reaction is isopentenyl diphosphate + dimethylallyl diphosphate = (2E)-geranyl diphosphate + diphosphate. It catalyses the reaction isopentenyl diphosphate + (2E)-geranyl diphosphate = (2E,6E)-farnesyl diphosphate + diphosphate. It carries out the reaction isopentenyl diphosphate + (2E,6E)-farnesyl diphosphate = (2E,6E,10E)-geranylgeranyl diphosphate + diphosphate. It functions in the pathway isoprenoid biosynthesis; geranyl diphosphate biosynthesis; geranyl diphosphate from dimethylallyl diphosphate and isopentenyl diphosphate: step 1/1. It participates in isoprenoid biosynthesis; farnesyl diphosphate biosynthesis; farnesyl diphosphate from geranyl diphosphate and isopentenyl diphosphate: step 1/1. Its pathway is isoprenoid biosynthesis; geranylgeranyl diphosphate biosynthesis; geranylgeranyl diphosphate from farnesyl diphosphate and isopentenyl diphosphate: step 1/1. In terms of biological role, catalyzes the addition of 3 molecules of isopentenyl diphosphate (IPP) onto dimethylallyl diphosphate (DMAPP) to form geranylgeranyl pyrophosphate (GGPP). Catalyzes the synthesis of geranylgeranyl pyrophosphate as a major product and of farnesyl pyrophosphate in smaller amounts. The sequence is that of Geranylgeranyl pyrophosphate synthase from Geoglobus acetivorans.